A 250-amino-acid chain; its full sequence is uncharacterized protein (250 aa).

Positions 165–208 form a coiled coil; that stretch reads HLNLETANTKATEYQKNYQEELKQRQELRQKLLQERTQKMLEAL. Residues 201 to 233 show a composition bias toward basic and acidic residues; that stretch reads TQKMLEALHQEETPEQDARDTAKKKTDQEEHTM. Residues 201 to 250 are disordered; sequence TQKMLEALHQEETPEQDARDTAKKKTDQEEHTMRKANAPKTKASGEAPTP.

This is an uncharacterized protein from Treponema pallidum (strain Nichols).